A 262-amino-acid chain; its full sequence is Sulfite reductase, dissimilatory-type subunit beta (262 aa).

Cysteine 151, cysteine 188, cysteine 189, cysteine 193, cysteine 231, cysteine 258, and cysteine 261 together coordinate [4Fe-4S] cluster. Cysteine 193 is a binding site for siroheme.

In terms of assembly, heterohexamer of two alpha, two beta and two gamma subunits. [4Fe-4S] cluster serves as cofactor. The cofactor is siroheme.

The enzyme catalyses [DsrC protein]-trisulfide + NAD(+) + 3 H2O = [DsrC protein]-dithiol + sulfite + NADH + 3 H(+). In terms of biological role, catalyzes the reduction of sulfite to sulfide. This is the terminal oxidation reaction in sulfate respiration, a process catalyzed by the sulfate-reducing bacteria. This chain is Sulfite reductase, dissimilatory-type subunit beta (dsrB), found in Megalodesulfovibrio gigas (strain ATCC 19364 / DSM 1382 / NCIMB 9332 / VKM B-1759) (Desulfovibrio gigas).